Reading from the N-terminus, the 355-residue chain is Beta-1,2-mannobiose phosphorylase (355 aa).

Beta-D-Manp-(1-&gt;2)-beta-D-Manp-(1-&gt;2)-D-Manp contacts are provided by residues N31, R46, R89, E140–D141, K188, Y273, and D333.

It belongs to the glycosyl hydrolase 130 family. As to quaternary structure, homodimer.

The enzyme catalyses beta-D-mannopyranosyl-(1-&gt;2)-D-mannopyranose + phosphate = alpha-D-mannose 1-phosphate + D-mannose. Its function is as follows. Catalyzes the reversible phosphorolysis of 1,2-beta-oligomannan. In phosphorolytic reactions, prefers beta-1,2-mannobiose (beta-1,2-Man2) as substrate, but can also use beta-1,2-mannotriose. This Listeria innocua serovar 6a (strain ATCC BAA-680 / CLIP 11262) protein is Beta-1,2-mannobiose phosphorylase.